The primary structure comprises 276 residues: F420-dependent methylenetetrahydromethanopterin dehydrogenase (276 aa).

Belongs to the MTD family.

The catalysed reaction is 5,10-methylenetetrahydromethanopterin + oxidized coenzyme F420-(gamma-L-Glu)(n) + 2 H(+) = 5,10-methenyl-5,6,7,8-tetrahydromethanopterin + reduced coenzyme F420-(gamma-L-Glu)(n). The protein operates within one-carbon metabolism; methanogenesis from CO(2); 5,10-methylene-5,6,7,8-tetrahydromethanopterin from 5,10-methenyl-5,6,7,8-tetrahydromethanopterin (coenzyme F420 route): step 1/1. Its function is as follows. Catalyzes the reversible reduction of methenyl-H(4)MPT(+) to methylene-H(4)MPT. This chain is F420-dependent methylenetetrahydromethanopterin dehydrogenase, found in Methanococcus vannielii (strain ATCC 35089 / DSM 1224 / JCM 13029 / OCM 148 / SB).